The chain runs to 308 residues: Transaldolase (308 aa).

Catalysis depends on Lys125, which acts as the Schiff-base intermediate with substrate.

The protein belongs to the transaldolase family. Type 1 subfamily. As to quaternary structure, homodimer.

It localises to the cytoplasm. It catalyses the reaction D-sedoheptulose 7-phosphate + D-glyceraldehyde 3-phosphate = D-erythrose 4-phosphate + beta-D-fructose 6-phosphate. It functions in the pathway carbohydrate degradation; pentose phosphate pathway; D-glyceraldehyde 3-phosphate and beta-D-fructose 6-phosphate from D-ribose 5-phosphate and D-xylulose 5-phosphate (non-oxidative stage): step 2/3. Its function is as follows. Transaldolase is important for the balance of metabolites in the pentose-phosphate pathway. The sequence is that of Transaldolase from Pseudomonas savastanoi pv. phaseolicola (strain 1448A / Race 6) (Pseudomonas syringae pv. phaseolicola (strain 1448A / Race 6)).